The chain runs to 614 residues: 2-succinyl-5-enolpyruvyl-6-hydroxy-3-cyclohexene-1-carboxylate synthase (614 aa).

Belongs to the TPP enzyme family. MenD subfamily. Homodimer. Requires Mg(2+) as cofactor. Mn(2+) is required as a cofactor. The cofactor is thiamine diphosphate.

The enzyme catalyses isochorismate + 2-oxoglutarate + H(+) = 5-enolpyruvoyl-6-hydroxy-2-succinyl-cyclohex-3-ene-1-carboxylate + CO2. It participates in quinol/quinone metabolism; 1,4-dihydroxy-2-naphthoate biosynthesis; 1,4-dihydroxy-2-naphthoate from chorismate: step 2/7. It functions in the pathway quinol/quinone metabolism; menaquinone biosynthesis. Functionally, catalyzes the thiamine diphosphate-dependent decarboxylation of 2-oxoglutarate and the subsequent addition of the resulting succinic semialdehyde-thiamine pyrophosphate anion to isochorismate to yield 2-succinyl-5-enolpyruvyl-6-hydroxy-3-cyclohexene-1-carboxylate (SEPHCHC). This Sorangium cellulosum (strain So ce56) (Polyangium cellulosum (strain So ce56)) protein is 2-succinyl-5-enolpyruvyl-6-hydroxy-3-cyclohexene-1-carboxylate synthase.